The following is a 429-amino-acid chain: Tol-Pal system protein TolB (429 aa).

The signal sequence occupies residues 1 to 28 (MSITPSFSRRSVVSLLAAGAFSSMSAFA).

This sequence belongs to the TolB family. In terms of assembly, the Tol-Pal system is composed of five core proteins: the inner membrane proteins TolA, TolQ and TolR, the periplasmic protein TolB and the outer membrane protein Pal. They form a network linking the inner and outer membranes and the peptidoglycan layer.

The protein localises to the periplasm. Its function is as follows. Part of the Tol-Pal system, which plays a role in outer membrane invagination during cell division and is important for maintaining outer membrane integrity. The chain is Tol-Pal system protein TolB from Polaromonas naphthalenivorans (strain CJ2).